A 241-amino-acid polypeptide reads, in one-letter code: Keratin-associated protein 5-5 (241 aa).

Tandem repeats lie at residues 35–38 (CCKP), 41–44 (CCKP), 47–50 (CCVP), 105–108 (CCKP), 115–118 (CCKP), 133–136 (CCKP), 143–146 (CCKP), 161–164 (CCKP), 171–174 (CCKP), 181–184 (CCKP), 191–194 (CCKP), 201–204 (CCKP), 211–214 (CCKP), 221–224 (CCKP), and 231–234 (CCAP). The segment at 35–234 (CCKPVCCCKP…CCCQSSCCAP (200 aa)) is 15 X 4 AA repeats of C-C-X-P.

This sequence belongs to the KRTAP type 5 family. Interacts with hair keratins.

Its function is as follows. In the hair cortex, hair keratin intermediate filaments are embedded in an interfilamentous matrix, consisting of hair keratin-associated protein (KRTAP), which are essential for the formation of a rigid and resistant hair shaft through their extensive disulfide bond cross-linking with abundant cysteine residues of hair keratins. The matrix proteins include the high-sulfur and high-glycine-tyrosine keratins. This Mus musculus (Mouse) protein is Keratin-associated protein 5-5.